Reading from the N-terminus, the 144-residue chain is UPF0735 ACT domain-containing protein LCABL_12100 (144 aa).

In terms of domain architecture, ACT spans 68–143 (VISLMLHHDR…GVSDVHLVSV (76 aa)).

The protein belongs to the UPF0735 family.

In Lacticaseibacillus casei (strain BL23) (Lactobacillus casei), this protein is UPF0735 ACT domain-containing protein LCABL_12100.